The sequence spans 343 residues: Calcium/calmodulin-dependent protein kinase type 1B (343 aa).

The Protein kinase domain maps to 15-270 (YEIRERLGSG…CQQALRHLWI (256 aa)). Residues 21–29 (LGSGAFSEV) and K44 contribute to the ATP site. The Proton acceptor role is filled by D136. Positions 290–311 (KNFARTHWKRAFNATSFLRHIR) are calmodulin-binding. The interval 319 to 343 (GEGASEQGMARHSHSGLRAGQPPKW) is disordered.

Belongs to the protein kinase superfamily. CAMK Ser/Thr protein kinase family. CaMK subfamily. Phosphorylated by CAMKK1.

It is found in the cytoplasm. The protein localises to the nucleus. The enzyme catalyses L-seryl-[protein] + ATP = O-phospho-L-seryl-[protein] + ADP + H(+). The catalysed reaction is L-threonyl-[protein] + ATP = O-phospho-L-threonyl-[protein] + ADP + H(+). Activated by Ca(2+)/calmodulin. In terms of biological role, calcium/calmodulin-dependent protein kinase belonging to a proposed calcium-triggered signaling cascade. In vitro phosphorylates CREB1 and SYN1/synapsin I. Phosphorylates and activates CAMK1. The protein is Calcium/calmodulin-dependent protein kinase type 1B (PNCK) of Homo sapiens (Human).